The chain runs to 172 residues: Neudesin (172 aa).

The signal sequence occupies residues 1–31 (MVGPAPRRRLRPLAALALVLALAPGLPTARA). A Cytochrome b5 heme-binding domain is found at 44-129 (VRLFTEEELA…KELEALDEVF (86 aa)). N6-acetyllysine is present on Lys136. A disordered region spans residues 151-172 (DGSPNLDFKPEDQPHFDIKDEF). The segment covering 158 to 172 (FKPEDQPHFDIKDEF) has biased composition (basic and acidic residues).

Belongs to the cytochrome b5 family. MAPR subfamily. As to quaternary structure, interacts with PINK1 and PARK7. Ubiquitously expressed with high expression in heart. Over-expressed in various tumors including carcinomas of the uterine cervix, lymphoma, colon, lung, skin and leukemia, as well as carcinoma of the breast.

It is found in the secreted. Its subcellular location is the extracellular space. The protein resides in the mitochondrion. The protein localises to the endoplasmic reticulum. Functionally, acts as a neurotrophic factor in postnatal mature neurons enhancing neuronal survival. Promotes cell proliferation and neurogenesis in undifferentiated neural progenitor cells at the embryonic stage and inhibits differentiation of astrocytes. Its neurotrophic activity is exerted via MAPK1/ERK2, MAPK3/ERK1 and AKT1/AKT pathways. Neurotrophic activity is enhanced by binding to heme. Also acts as an anorexigenic neurotrophic factor that contributes to energy balance. This is Neudesin from Homo sapiens (Human).